The sequence spans 551 residues: uncharacterized protein (551 aa).

Polar residues predominate over residues 1–11 (MRRVSLPNQLN). 2 disordered regions span residues 1-22 (MRRV…TRGE) and 523-551 (CDPT…QAFH). Positions 12-22 (ETRRRSPTRGE) are enriched in basic and acidic residues. Residues 537–551 (QQPQQQQQQQQQAFH) are compositionally biased toward low complexity.

It to Synechocystis PCC 6803 sll0335 and to M.tuberculosis Rv2567.

This is an uncharacterized protein from Mycobacterium bovis (strain ATCC BAA-935 / AF2122/97).